A 252-amino-acid polypeptide reads, in one-letter code: Probable aquaporin TIP1-2 (252 aa).

2 helical membrane passes run 24–44 and 57–77; these read VAEFISMLIFVFAGSGSGMAF and GLIAASLAHALALFVAVAVGA. The NPA 1 motif lies at 85-87; that stretch reads NPA. Transmembrane regions (helical) follow at residues 115–137, 144–164, and 173–193; these read VVACLLLKIATGGAAVGAFSLSA, AVVFEIVMTFGLVYTVYATAV, and VIAPIAIGFIVGANILAGGAF. Positions 199–201 match the NPA 2 motif; it reads NPA. The helical transmembrane segment at 220-240 threads the bilayer; the sequence is WLGPFVGAAIAALIYDIIFIG.

This sequence belongs to the MIP/aquaporin (TC 1.A.8) family. TIP (TC 1.A.8.10) subfamily. Expressed in leaves.

The protein localises to the vacuole membrane. Functionally, aquaporins facilitate the transport of water and small neutral solutes across cell membranes. May be involved in transport from the vacuolar compartment to the cytoplasm. This Oryza sativa subsp. japonica (Rice) protein is Probable aquaporin TIP1-2 (TIP1-2).